The primary structure comprises 626 residues: Methanol dehydrogenase [cytochrome c] subunit 1 (626 aa).

An N-terminal signal peptide occupies residues 1–27; it reads MSRFVTSVSALAMLALAPAALSSVAYA. Residues Cys130 and Cys131 are joined by a disulfide bond. Glu204 and Asn288 together coordinate Ca(2+). Asp330 acts as the Proton acceptor in catalysis. An intrachain disulfide couples Cys413 to Cys442.

It belongs to the bacterial PQQ dehydrogenase family. Heterotetramer composed of 2 alpha and 2 beta subunits. Requires pyrroloquinoline quinone as cofactor. It depends on Ca(2+) as a cofactor.

The protein localises to the cell inner membrane. It carries out the reaction 2 Fe(III)-[cytochrome cL] + a primary alcohol = 2 Fe(II)-[cytochrome cL] + an aldehyde + 2 H(+). Catalyzes the oxidation of primary alcohols including methanol. This chain is Methanol dehydrogenase [cytochrome c] subunit 1 (moxF), found in Methylobacterium organophilum.